The chain runs to 1102 residues: Protein MMS22-like (1102 aa).

It belongs to the MMS22 family. MMS22L subfamily.

It is found in the nucleus. The protein localises to the chromosome. Functionally, involved in recombination-dependent repair of stalled or collapsed replication forks. This is Protein MMS22-like from Drosophila melanogaster (Fruit fly).